The sequence spans 80 residues: Acyl carrier protein (80 aa).

The Carrier domain maps to 4–79 (EDIFSKVKDI…DAVDFIASKA (76 aa)). Serine 39 carries the O-(pantetheine 4'-phosphoryl)serine modification.

The protein belongs to the acyl carrier protein (ACP) family. In terms of processing, 4'-phosphopantetheine is transferred from CoA to a specific serine of apo-ACP by AcpS. This modification is essential for activity because fatty acids are bound in thioester linkage to the sulfhydryl of the prosthetic group.

The protein localises to the cytoplasm. It functions in the pathway lipid metabolism; fatty acid biosynthesis. Its function is as follows. Carrier of the growing fatty acid chain in fatty acid biosynthesis. This is Acyl carrier protein from Synechococcus elongatus (strain ATCC 33912 / PCC 7942 / FACHB-805) (Anacystis nidulans R2).